Consider the following 228-residue polypeptide: Large ribosomal subunit protein uL3 (228 aa).

The tract at residues 135-159 is disordered; it reads MKSQRASHGNSRSHNVPGSIGMAQD. The span at 140–150 shows a compositional bias: polar residues; it reads ASHGNSRSHNV. Q158 carries the N5-methylglutamine modification.

Belongs to the universal ribosomal protein uL3 family. Part of the 50S ribosomal subunit. Forms a cluster with proteins L14 and L19. Post-translationally, methylated by PrmB.

In terms of biological role, one of the primary rRNA binding proteins, it binds directly near the 3'-end of the 23S rRNA, where it nucleates assembly of the 50S subunit. The sequence is that of Large ribosomal subunit protein uL3 from Albidiferax ferrireducens (strain ATCC BAA-621 / DSM 15236 / T118) (Rhodoferax ferrireducens).